We begin with the raw amino-acid sequence, 362 residues long: S-adenosylmethionine:tRNA ribosyltransferase-isomerase (362 aa).

It belongs to the QueA family. Monomer.

It is found in the cytoplasm. It catalyses the reaction 7-aminomethyl-7-carbaguanosine(34) in tRNA + S-adenosyl-L-methionine = epoxyqueuosine(34) in tRNA + adenine + L-methionine + 2 H(+). It participates in tRNA modification; tRNA-queuosine biosynthesis. Its function is as follows. Transfers and isomerizes the ribose moiety from AdoMet to the 7-aminomethyl group of 7-deazaguanine (preQ1-tRNA) to give epoxyqueuosine (oQ-tRNA). The protein is S-adenosylmethionine:tRNA ribosyltransferase-isomerase of Yersinia enterocolitica serotype O:8 / biotype 1B (strain NCTC 13174 / 8081).